The chain runs to 299 residues: MTTLVVHGGAGRWAVSEEKRQAVKRALEDAVREGLAAMLRGGAVDGVVAAVEYMEASGLFNAGYGSVYALDGRVYMDAGIMDGKTGRAGAVAAVEGVKSAVRLARAVMELTDHVILAGEGATLLAKRLGLTAPFYKFYSEEKNRQFSQVLEEARQGKWHFKRVLDFADTVGAVALDKDGNLAAATSTGGVWLKLPGRVGDSPLPGAGFWAENGVGAFSATGVGEVIILSTLSLRARDLLEQTGDIRAAVEKAVEYVTRRFGPDTAGLIGVDARGRFAFSYNTRAMARGWGKPGEVRAEL.

The Nucleophile role is filled by Thr169. Residues Arg197 to Asp200 and Thr220 to Gly223 each bind substrate.

Belongs to the Ntn-hydrolase family. As to quaternary structure, heterotetramer of two alpha and two beta chains arranged as a dimer of alpha/beta heterodimers. The uncleaved protein forms homodimers. Post-translationally, autocleaved. Generates the alpha and beta subunits. The N-terminal residue of the beta subunit is thought to be responsible for the nucleophile hydrolase activity.

It catalyses the reaction L-asparagine + H2O = L-aspartate + NH4(+). Its activity is regulated as follows. Divalent metal ions and EDTA do not have significant effect on enzyme activity, indicating that activity is metal-independent. Its function is as follows. Catalyzes the hydrolysis of L-asparagine into L-aspartate and ammonia. Also displays D-asparaginase activity, which is about 20% of the L-asparaginase activity. Does not exhibit glutaminase activity. This chain is Plant-type L-asparaginase, found in Pyrobaculum calidifontis (strain DSM 21063 / JCM 11548 / VA1).